A 372-amino-acid chain; its full sequence is Transcription factor MYB80 (372 aa).

HTH myb-type domains lie at 9-65 and 66-116; these read KDNV…RPDL and KHGE…KKKL. 2 consecutive DNA-binding regions (H-T-H motif) follow at residues 37–61 and 89–112; these read WRLIPKNAGLQRCGKSCRLRWTNYL and WSVIAAQLPGRTDNDVKNHWNTKL. Residues 298–311 show a composition bias toward polar residues; that stretch reads MWSHQSLYSGSSGT. A disordered region spans residues 298–347; sequence MWSHQSLYSGSSGTEEARRELPEKGNDSVGSSGGDDDAADDGKDSGKGAA. Positions 312–323 are enriched in basic and acidic residues; it reads EEARRELPEKGN.

The protein resides in the nucleus. Its function is as follows. Essential for tapetum development in anthers and microsporogenesis. May regulate the timing of tapetal programmed cell death (PCD) which is critical for pollen development. This is Transcription factor MYB80 from Oryza sativa subsp. japonica (Rice).